The following is a 231-amino-acid chain: Acyltransferase PGAP2 (231 aa).

Residues 1–22 (MQQVPYGSVDRDKPLIRVPFTR) lie on the Cytoplasmic side of the membrane. A helical membrane pass occupies residues 23–43 (LAVITVCLPLLGLVACIVLAM). Residues 44–78 (LYHYNDATYTHCQVPNYLPSISAAISLTPERYIWR) are Lumenal-facing. Residues 79–99 (FSIGLHSAPRFLVAAAYLSFY) form a helical membrane-spanning segment. At 100–110 (RGRFSRRLTEQ) the chain is on the cytoplasmic side. The helical transmembrane segment at 111–131 (LLSGFTFLLALSENVGLLLLT) threads the bilayer. Topologically, residues 132–146 (YVSSTETYSVHKSGF) are lumenal. A helical transmembrane segment spans residues 147–167 (ILFIGSSLFHMLCTCKLWSLI). The Cytoplasmic portion of the chain corresponds to 168 to 179 (VKYSISSEEMMS). Residues 180–200 (YWFKLRLFLFNGGCCVLAVYF) form a helical membrane-spanning segment. Residues 201 to 231 (YRRHNTYCEEGITHASRCVSIWWCCPTWPST) are Lumenal-facing.

It belongs to the PGAP2 family.

The protein resides in the golgi apparatus membrane. Involved in the fatty acid remodeling steps of GPI-anchor maturation where the unsaturated acyl chain at sn-2 of inositol phosphate is replaced by a saturated stearoyl chain. May catalyze the second step of the fatty acid remodeling, by reacylating a lyso-GPI intermediate at sn-2 of inositol phosphate by a saturated chain. The fatty acid remodeling steps is critical for the integration of GPI-APs into lipid rafts. The sequence is that of Acyltransferase PGAP2 from Danio rerio (Zebrafish).